The chain runs to 543 residues: Excitatory amino acid transporter 1 (543 aa).

The Cytoplasmic portion of the chain corresponds to 1–47 (MTKSNGEEPRMGGRMERLQQGVRKRTLLAKKKVQSLTKEDVKSYLFR). Residues 48 to 68 (NAFVLLTVTAVIVGTILGFAL) form a helical membrane-spanning segment. At 69–86 (RPYKMSYREVKYFSFPGE) the chain is on the extracellular side. Residues 87 to 108 (LLMRMLQMLVLPLIISSLVTGM) form a helical membrane-spanning segment. Topologically, residues 109–122 (AALDSKASGKMGMR) are cytoplasmic. A helical transmembrane segment spans residues 123 to 145 (AVVYYMTTTIIAVVIGIIIVIII). The Extracellular segment spans residues 146-236 (HPGKGTKENM…IREEMVPVPG (91 aa)). N-linked (GlcNAc...) asparagine glycosylation is found at asparagine 206 and asparagine 216. A helical membrane pass occupies residues 237–260 (SVNGVNALGLVVFSMCFGFVIGNM). The Cytoplasmic segment spans residues 261 to 269 (KEQGQALRE). The chain crosses the membrane as a helical span at residues 270–297 (FFDSLNEAIMRLVAVIMWYAPLGILFLI). Residues 298 to 318 (AGKIVEMEDMGVIGGQLAMYT) are Extracellular-facing. Residues 319–340 (VTVIVGLLIHAVIVLPLLYFLV) traverse the membrane as a helical segment. Over 341 to 345 (TRKNP) the chain is Cytoplasmic. The discontinuously helical intramembrane region spans 346 to 376 (WVFIGGLLQALITALGTSSSSATLPITFKCL). Residue 363–365 (SSS) coordinates L-aspartate. Topologically, residues 377 to 385 (EENNGVDKR) are cytoplasmic. Residues 386–412 (ITRFVLPVGATINMDGTALYEALAAIF) form a helical membrane-spanning segment. Na(+) contacts are provided by glycine 394, threonine 396, and asparagine 398. Threonine 402 contributes to the L-aspartate binding site. Residues 413 to 425 (IAQVNNFDLNFGQ) lie on the Extracellular side of the membrane. Positions 426-459 (IITISITATAASIGAAGIPQAGLVTMVIVLTSVG) form an intramembrane region, discontinuously helical. 443-447 (IPQAG) contributes to the L-aspartate binding site. Topologically, residues 460–472 (LPTDDITLIIAVD) are extracellular. Residues 473 to 494 (WFLDRLRTTTNVLGDSLGAGIV) traverse the membrane as a helical segment. The L-aspartate site is built by aspartate 476 and asparagine 483. The Na(+) site is built by asparagine 483 and aspartate 487. Residues 495 to 543 (EHLSRHELKNRDVEMGNSVIEENEMKKPYQLIAQDNEPEKPVADSETKM) are Cytoplasmic-facing. Serine 512 carries the post-translational modification Phosphoserine. The tract at residues 522–543 (PYQLIAQDNEPEKPVADSETKM) is disordered. Basic and acidic residues predominate over residues 531 to 543 (EPEKPVADSETKM).

Belongs to the dicarboxylate/amino acid:cation symporter (DAACS) (TC 2.A.23) family. SLC1A3 subfamily. In terms of assembly, homotrimer. In terms of processing, glycosylated. Detected in brain, in Bergmann glia arborising into the molecular layer of the cerebellum (at protein level). Localized in brain and is highly enriched in the Purkinje cell layer in cerebellum. Intermediate level in lung, low level in spleen, skeletal muscle and testis.

Its subcellular location is the cell membrane. The enzyme catalyses K(+)(in) + L-glutamate(out) + 3 Na(+)(out) + H(+)(out) = K(+)(out) + L-glutamate(in) + 3 Na(+)(in) + H(+)(in). It catalyses the reaction K(+)(in) + L-aspartate(out) + 3 Na(+)(out) + H(+)(out) = K(+)(out) + L-aspartate(in) + 3 Na(+)(in) + H(+)(in). The catalysed reaction is D-aspartate(out) + K(+)(in) + 3 Na(+)(out) + H(+)(out) = D-aspartate(in) + K(+)(out) + 3 Na(+)(in) + H(+)(in). Functionally, sodium-dependent, high-affinity amino acid transporter that mediates the uptake of L-glutamate and also L-aspartate and D-aspartate. Functions as a symporter that transports one amino acid molecule together with two or three Na(+) ions and one proton, in parallel with the counter-transport of one K(+) ion. Plays a redundant role in the rapid removal of released glutamate from the synaptic cleft, which is essential for terminating the postsynaptic action of glutamate. The sequence is that of Excitatory amino acid transporter 1 (Slc1a3) from Mus musculus (Mouse).